A 371-amino-acid polypeptide reads, in one-letter code: tRNA-specific 2-thiouridylase MnmA (371 aa).

ATP contacts are provided by residues 22-29 (GLSGGVDS) and M48. The segment at 108–110 (NPD) is interaction with target base in tRNA. C113 serves as the catalytic Nucleophile. Residues C113 and C209 are joined by a disulfide bond. Position 137 (G137) interacts with ATP. The interval 159 to 161 (KDQ) is interaction with tRNA. C209 functions as the Cysteine persulfide intermediate in the catalytic mechanism.

This sequence belongs to the MnmA/TRMU family.

The protein resides in the cytoplasm. It carries out the reaction S-sulfanyl-L-cysteinyl-[protein] + uridine(34) in tRNA + AH2 + ATP = 2-thiouridine(34) in tRNA + L-cysteinyl-[protein] + A + AMP + diphosphate + H(+). Its function is as follows. Catalyzes the 2-thiolation of uridine at the wobble position (U34) of tRNA, leading to the formation of s(2)U34. The polypeptide is tRNA-specific 2-thiouridylase MnmA (Coxiella burnetii (strain CbuK_Q154) (Coxiella burnetii (strain Q154))).